The primary structure comprises 1034 residues: Potassium-transporting ATPase alpha chain 1 (1034 aa).

Topologically, residues 2-97 (GKAENYELYQ…NALRPPRGTP (96 aa)) are cytoplasmic. Residues Tyr-7 and Tyr-10 each carry the phosphotyrosine modification. Residues 13–40 (ELGPGPSGDMAAKMSKKKAGRGGGKRKE) are disordered. A compositionally biased stretch (basic residues) spans 26–39 (MSKKKAGRGGGKRK). A Phosphoserine; by PKA and PKC modification is found at Ser-27. Residues 98–118 (EYVKFARQLAGGLQCLMWVAA) traverse the membrane as a helical segment. Over 119-141 (AICLIAFAIQASEGDLTTDDNLY) the chain is Lumenal. The chain crosses the membrane as a helical span at residues 142-162 (LALALIAVVVVTGCFGYYQEF). The Cytoplasmic segment spans residues 163 to 298 (KSTNIIASFK…NEKTPIAIEI (136 aa)). Residues 222–244 (KVDNSSLTGESEPQTRSPECTHE) form a disordered region. Residues 225 to 239 (NSSLTGESEPQTRSP) show a composition bias toward polar residues. Residues 299 to 318 (EHFVDIIAGLAILFGATFFI) traverse the membrane as a helical segment. Residues 319 to 330 (VAMCIGYTFLRA) are Lumenal-facing. Residues 331-348 (MVFFMAIVVAYVPEGLLA) form a helical membrane-spanning segment. 4 residues coordinate K(+): Val-339, Ala-340, Val-342, and Glu-344. Topologically, residues 349–782 (TVTVCLSLTA…EQGRLIFDNL (434 aa)) are cytoplasmic. The active-site 4-aspartylphosphate intermediate is the Asp-386. The Mg(2+) site is built by Asp-386 and Thr-388. Residues Ser-462 and Ser-600 each carry the phosphoserine modification. Mg(2+) contacts are provided by Asp-727 and Asp-731. The chain crosses the membrane as a helical span at residues 783-802 (KKSIAYTLTKNIPELTPYLI). Glu-796 serves as a coordination point for K(+). Residues 803–812 (YITVSVPLPL) lie on the Lumenal side of the membrane. A helical transmembrane segment spans residues 813-833 (GCITILFIELCTDIFPSVSLA). K(+) is bound at residue Glu-821. Over 834-853 (YEKAESDIMHLRPRNPKRDR) the chain is Cytoplasmic. Ser-839 bears the Phosphoserine mark. Residues 854-876 (LVNEPLAAYSYFQIGAIQSFAGF) form a helical membrane-spanning segment. Residues 877 to 928 (TDYFTAMAQEGWFPLLCVGLRPQWENHHLQDLQDSYGQEWTFGQRLYQQYTC) are Lumenal-facing. A helical membrane pass occupies residues 929–948 (YTVFFISIEMCQIADVLIRK). Residues 949–962 (TRRLSAFQQGFFRN) lie on the Cytoplasmic side of the membrane. Ser-953 carries the phosphoserine; by PKA modification. A helical transmembrane segment spans residues 963–981 (RILVIAIVFQVCIGCFLCY). Over 982–996 (CPGMPNIFNFMPIRF) the chain is Lumenal. The chain crosses the membrane as a helical span at residues 997 to 1017 (QWWLVPMPFGLLIFVYDEIRK). Topologically, residues 1018 to 1034 (LGVRCCPGSWWDQELYY) are cytoplasmic.

Belongs to the cation transport ATPase (P-type) (TC 3.A.3) family. Type IIC subfamily. The gastric H(+)/K(+) ATPase pump is composed of the catalytic alpha subunit ATP4A and the regulatory beta subunit ATP4B. Interacts (via the P-domain) with ATP4B (via N-terminus); this interaction stabilizes the lumenal-open E2 conformation state and prevents the reverse reaction of the transport cycle.

Its subcellular location is the apical cell membrane. It is found in the cell membrane. The catalysed reaction is K(+)(out) + ATP + H2O + H(+)(in) = K(+)(in) + ADP + phosphate + 2 H(+)(out). Its activity is regulated as follows. Down-regulated by K(+)-competitive acid blockers (P-CABs) such as vonoprazan. The catalytic subunit of the gastric H(+)/K(+) ATPase pump which transports H(+) ions in exchange for K(+) ions across the apical membrane of parietal cells. Uses ATP as an energy source to pump H(+) ions to the gastric lumen while transporting K(+) ion from the lumen into the cell. Remarkably generates a million-fold proton gradient across the gastric parietal cell membrane, acidifying the gastric juice down to pH 1. Within a transport cycle, the transfer of a H(+) ion across the membrane is coupled to ATP hydrolysis and is associated with a transient phosphorylation that shifts the pump conformation from inward-facing (E1) to outward-facing state (E2). The release of the H(+) ion in the stomach lumen is followed by binding of K(+) ion converting the pump conformation back to the E1 state. The polypeptide is Potassium-transporting ATPase alpha chain 1 (ATP4A) (Sus scrofa (Pig)).